A 526-amino-acid chain; its full sequence is MSQDTEVDMKDVELNELEPEKQPMNAADGAAAGEKNGLVKIKVAEDETEAGVKFTGLSKEELLKVAGSPGWVRTRWALLLLFWLGWLGMLAGAVVIIVRAPRCRELPVQRWWHKGALYRIGDLQAFVGRDAGGIAGLKSHLEYLSTLKVKGLVLGPIHKNQKDEINETDLKQINPTLGSQEDFKDLLQSAKKKSIHIILDLTPNYQGQNAWFLPAQADIVATKMKEALSSWLQDGVDGFQFRDVGKLMNAPLYLAEWQNITKNLSEDRLLIAGTESSDLQQIVNILESTSDLLLTSSYLSNSTFTGERTESLVTRFLNATGSQWCSWSVSQAGLLADFIPDHLLRLYQLLLFTLPGTPVFSYGDELGLQGALPGQPAKAPLMPWNESSIFHIPRPVSLNMTVKGQNEDPGSLLTQFRRLSDLRGKERSLLHGDFHALSSSPDLFSYIRHWDQNERYLVVLNFRDSGRSARLGASNLPAGISLPASAKLLLSTDSARQSREEDTSLKLENLSLNPYEGLLLQFPFVA.

The interval 1 to 31 (MSQDTEVDMKDVELNELEPEKQPMNAADGAA) is disordered. The Cytoplasmic portion of the chain corresponds to 1–75 (MSQDTEVDMK…AGSPGWVRTR (75 aa)). At serine 2 the chain carries Phosphoserine. At threonine 5 the chain carries Phosphothreonine. Positions 7–21 (VDMKDVELNELEPEK) are enriched in basic and acidic residues. Lysine 42 participates in a covalent cross-link: Glycyl lysine isopeptide (Lys-Gly) (interchain with G-Cter in ubiquitin). A Phosphoserine modification is found at serine 58. Residue lysine 59 forms a Glycyl lysine isopeptide (Lys-Gly) (interchain with G-Cter in SUMO2) linkage. A helical; Signal-anchor for type II membrane protein membrane pass occupies residues 76 to 99 (WALLLLFWLGWLGMLAGAVVIIVR). Residues 100 to 526 (APRCRELPVQ…GLLLQFPFVA (427 aa)) lie on the Extracellular side of the membrane. N-linked (GlcNAc...) asparagine glycosylation is found at asparagine 166, asparagine 259, and asparagine 263. A Phosphoserine modification is found at serine 300. The N-linked (GlcNAc...) asparagine glycan is linked to asparagine 301. A Phosphoserine modification is found at serine 302. Asparagine 318, asparagine 385, and asparagine 399 each carry an N-linked (GlcNAc...) asparagine glycan. Serine 420 is subject to Phosphoserine. The N-linked (GlcNAc...) asparagine glycan is linked to asparagine 509.

This sequence belongs to the SLC3A transporter family. Disulfide-linked heterodimer with a non-glycosylated light chain (SLC7A5, SLC7A6, SLC7A7, SLC7A8, SLC7A10 or SLC7A11). Interacts with TLCD3A/CT120 and ICAM1. Constitutively and specifically associates with beta-1 integrins (alpha-2/beta-1, alpha-3/beta-1, alpha-5/beta-1 and alpha-6/beta-1), but minimally with alpha-4/beta-1. Interacts with LAPTM4B; recruits SLC3A2 and SLC7A5 to lysosomes to promote leucine uptake into these organelles and is required for mTORC1 activation. In terms of processing, phosphorylation on Ser-300 or Ser-302 and on Ser-420 by ecto-protein kinases favors heterotypic cell-cell interactions. Post-translationally, N-glycosylated; N-glycosylation is crucial for trafficking and stability of SLC3A2 to the plasma membrane. In terms of tissue distribution, detected on the surface of embryonic epithelial cells in the epidermis, thymus, kidney, intestine, brain choroid plexus, and in retina. Detected in adult and embryonic brain, spleen, kidney, intestine and liver, and in adult testis (at protein level). Observed in all adult tissues tested with strongest expression in kidney, small intestine, spleen, thymus and liver. Moderate expression in brain, stomach, heart, testis, lung, skin, pancreas and skeletal muscle. In brain expressed on capillary endothelia in cerebral cortex.

Its subcellular location is the apical cell membrane. The protein resides in the cell membrane. It is found in the cell junction. The protein localises to the lysosome membrane. It localises to the melanosome. Its subcellular location is the basolateral cell membrane. Its function is as follows. Acts as a chaperone that facilitates biogenesis and trafficking of functional transporters heterodimers to the plasma membrane. Forms heterodimer with SLC7 family transporters (SLC7A5, SLC7A6, SLC7A7, SLC7A8, SLC7A10 and SLC7A11), a group of amino-acid antiporters. Heterodimers function as amino acids exchangers, the specificity of the substrate depending on the SLC7A subunit. Heterodimers SLC3A2/SLC7A6 or SLC3A2/SLC7A7 mediate the uptake of dibasic amino acids. Heterodimer SLC3A2/SLC7A11 functions as an antiporter by mediating the exchange of extracellular anionic L-cystine and intracellular L-glutamate across the cellular plasma membrane. SLC3A2/SLC7A10 translocates small neutral L- and D-amino acids across the plasma membrane. SLC3A2/SLC75 or SLC3A2/SLC7A8 translocates neutral amino acids with broad specificity, thyroid hormones and L-DOPA. SLC3A2 is essential for plasma membrane localization, stability, and the transport activity of SLC7A5 and SLC7A8. When associated with LAPTM4B, the heterodimer SLC7A5 is recruited to lysosomes to promote leucine uptake into these organelles, and thereby mediates mTORC1 activation. Modulates integrin-related signaling and is essential for integrin-dependent cell spreading, migration and tumor progression. The sequence is that of Amino acid transporter heavy chain SLC3A2 from Mus musculus (Mouse).